Consider the following 614-residue polypeptide: Zinc metalloproteinase dpy-31 (614 aa).

An N-terminal signal peptide occupies residues 1-24 (MSLLRCTTLLLVVVAIALPPCILG). Positions 25 to 150 (YSLHDGSRLD…KTGQRRVKRK (126 aa)) are excised as a propeptide. One can recognise a Peptidase M12A domain in the interval 150 to 349 (KFIGSDLRRW…IRLMNKIYCS (200 aa)). N-linked (GlcNAc...) asparagine glycosylation occurs at Asn190. Disulfide bonds link Cys193–Cys348, Cys216–Cys237, Cys352–Cys372, Cys374–Cys383, and Cys394–Cys422. Zn(2+) is bound at residue His245. The active site involves Glu246. Residues His249 and His255 each coordinate Zn(2+). One can recognise an EGF-like domain in the interval 344–384 (NKIYCSNVCSRKLPCQRGGYTDPRRCDRCRCPDGFTGQFCE). One can recognise a CUB domain in the interval 394–510 (CGGRIQVNGG…RGFEARARAL (117 aa)). N-linked (GlcNAc...) asparagine glycosylation is present at Asn461. The 50-residue stretch at 513–562 (NGQWASWSPWTPCTASCGACGSRMRTRVCSHGACAGEPVENQVCNTHPCN) folds into the TSP type-1 domain. 3 disulfides stabilise this stretch: Cys525-Cys556, Cys529-Cys561, and Cys541-Cys546.

Zn(2+) is required as a cofactor.

The protein localises to the secreted. With respect to regulation, inhibited by marimastat and tripeptide hydroxamic acids. Inhibited by 1,10-phenanthroline. Functionally, metalloprotease which cleaves the carboxyl terminus of procollagens to mature collagens. Probably involved in cuticular collagen maturation. The sequence is that of Zinc metalloproteinase dpy-31 from Teladorsagia circumcincta (Brown stomach worm).